The chain runs to 459 residues: Cysteine--tRNA ligase (459 aa).

A Zn(2+)-binding site is contributed by Cys28. The 'HIGH' region motif lies at 30-40 (VTVYDLCHIGH). The Zn(2+) site is built by Cys209, His234, and Glu238. A 'KMSKS' region motif is present at residues 266-270 (KMSKS). Lys269 is a binding site for ATP.

Belongs to the class-I aminoacyl-tRNA synthetase family. In terms of assembly, monomer. Requires Zn(2+) as cofactor.

It is found in the cytoplasm. The enzyme catalyses tRNA(Cys) + L-cysteine + ATP = L-cysteinyl-tRNA(Cys) + AMP + diphosphate. The polypeptide is Cysteine--tRNA ligase (Haemophilus influenzae (strain PittGG)).